A 441-amino-acid polypeptide reads, in one-letter code: Xaa-Pro dipeptidase (441 aa).

Mn(2+) is bound by residues D244, D255, H336, E381, and E420.

The protein belongs to the peptidase M24B family. Bacterial-type prolidase subfamily. Requires Mn(2+) as cofactor.

The catalysed reaction is Xaa-L-Pro dipeptide + H2O = an L-alpha-amino acid + L-proline. Splits dipeptides with a prolyl residue in the C-terminal position. The protein is Xaa-Pro dipeptidase of Xanthomonas oryzae pv. oryzae (strain MAFF 311018).